Here is a 1166-residue protein sequence, read N- to C-terminus: Calcium-activated potassium channel subunit alpha-1 (1166 aa).

A compositionally biased stretch (gly residues) spans 1 to 15 (MANGGGGGGGGGGGS). Disordered regions lie at residues 1–20 (MANG…LRMS) and 30–51 (LDAS…SVHE). Residues 1–74 (MANGGGGGGG…VPCDSRGQRM (74 aa)) lie on the Extracellular side of the membrane. The span at 33-48 (SSSSSSSSSSSSSSSS) shows a compositional bias: low complexity. A helical membrane pass occupies residues 75–95 (WWAFLASSMVTFFGGLFIILL). Over 96–166 (WRTLKYLWTV…MISAQTLTGR (71 aa)) the chain is Cytoplasmic. Residues Cys106, Cys107, and Cys109 are each lipidated (S-palmitoyl cysteine). Thr139 bears the Phosphothreonine; by CamK2 mark. A helical membrane pass occupies residues 167 to 187 (VLVVLVFALSIGALVIYFIDS). The Extracellular segment spans residues 188–202 (SNPIESCQNFYKDFT). The chain crosses the membrane as a helical span at residues 203–223 (LQIDMAFNVFFLLYFGLRFIA). The Cytoplasmic segment spans residues 224-227 (ANDK). The helical transmembrane segment at 228-248 (LWFWLEVNSVVDFFTVPPVFV) threads the bilayer. The Extracellular segment spans residues 249–252 (SVYL). A helical; Voltage-sensor membrane pass occupies residues 253-273 (NRSWLGLRFLRALRLIQFSEI). The Cytoplasmic segment spans residues 274–288 (LQFLNILKTSNSIKL). Residues 289-309 (VNLLSIFISTWLTAAGFIHLV) traverse the membrane as a helical segment. Over 310–323 (ENSGDPWENFQNNQ) the chain is Extracellular. The pore-forming intramembrane region spans 324-346 (ALTYWECVYLLMVTMSTVGYGDV). Positions 340–343 (TVGY) match the Selectivity for potassium motif. Topologically, residues 347–355 (YAKTTLGRL) are extracellular. A helical transmembrane segment spans residues 356-376 (FMVFFILGGLAMFASYVPEII). At 377–1166 (ELIGNRKKYG…KQKYVQEERL (790 aa)) the chain is on the cytoplasmic side. The 143-residue stretch at 395–537 (RKHIVVCGHI…WNWKEGDDAI (143 aa)) folds into the RCK N-terminal 1 domain. Mg(2+)-binding residues include Glu427, Gln450, and Glu452. A segment S7 region spans residues 544 to 564 (LGFIAQSCLAQGLSTMLANLF). The interval 601-621 (LSFPTVCELCFVKLKLLMIAI) is segment S8. The interval 665 to 669 (CKACH) is heme-binding motif. The tract at residues 689–717 (EQPSTLSPKKKQRNGGMRNSPSSSPKLMR) is disordered. Position 693 is a phosphothreonine (Thr693). 3 positions are modified to phosphoserine: Ser695, Ser708, and Ser712. Positions 767–787 (VLSGHVVVCIFGDVSSALIGL) are segment S9. An RCK N-terminal 2 domain is found at 769–913 (SGHVVVCIFG…MDRSSPDNSP (145 aa)). Thr900 bears the Phosphothreonine mark. Residues Ser908 and Ser912 each carry the phosphoserine modification. The Calcium bowl signature appears at 933–955 (TELVNDTNVQFLDQDDDDDPDTE). Residues Gln942, Asp945, Asp948, and Asp950 each contribute to the Ca(2+) site. The segment at 962–982 (FACGTAFAVSVLDSLMSATYF) is segment S10. Residues 1116–1141 (RASLSHSSHSSQSSSKKSSSVHSIPS) show a composition bias toward low complexity. Positions 1116 to 1166 (RASLSHSSHSSQSSSKKSSSVHSIPSTANRQNRPKSRESRDKQKYVQEERL) are disordered. Residues 1150-1166 (KSRESRDKQKYVQEERL) are compositionally biased toward basic and acidic residues. A phosphoserine; by PKG mark is found at Ser1151 and Ser1154.

The protein belongs to the potassium channel family. Calcium-activated (TC 1.A.1.3) subfamily. KCa1.1/KCNMA1 sub-subfamily. In terms of assembly, homotetramer; which constitutes the calcium-activated potassium channel. Interacts with beta subunits KCNMB1, KCNMB2, KCNMB3 and KCNMB4. Interacts with gamma subunits LRRC26, LRRC38, LRRC52 and LRRC55. Beta and gamma subunits are accessory, and modulate its activity. Interacts with RAB11B. Phosphorylated. Stimulated by PKG, but not by PKA. In smooth muscles, phosphorylation affects its activity. In terms of processing, phosphorylated. Exclusively stimulated by PKA. In smooth muscles, phosphorylation affects its activity. Post-translationally, incremental phosphorylation of Thr-139 of the KCNMA1 tetramer changes the response to ethanol from increased activation to inhibition of channel activity. Palmitoylation by ZDHHC22 and ZDHHC23 within the intracellular linker between the S0 and S1 transmembrane domains regulates localization to the plasma membrane. Depalmitoylated by LYPLA1 and LYPLAL1, leading to retard exit from the trans-Golgi network.

It is found in the cell membrane. It carries out the reaction K(+)(in) = K(+)(out). Its activity is regulated as follows. Ethanol and carbon monoxide-bound heme increase channel activation. Heme inhibits channel activation. Phosphorylation of Thr-139 leads to inhibition of channel activity by ethanol. Its function is as follows. Potassium channel activated by both membrane depolarization or increase in cytosolic Ca(2+) that mediates export of K(+). It is also activated by concentration of cytosolic Mg(2+). Its activation dampens the excitatory events that elevate the cytosolic Ca(2+) concentration and/or depolarize the cell membrane. It therefore contributes to repolarization of the membrane potential. Plays a key role in controlling excitability in a number of systems, such as regulation of the contraction of smooth muscle, the tuning of hair cells in the cochlea, regulation of transmitter release, and innate immunity. In smooth muscles, its activation by high level of Ca(2+), caused by ryanodine receptors in the sarcoplasmic reticulum, regulates the membrane potential. In cochlea cells, its number and kinetic properties partly determine the characteristic frequency of each hair cell and thereby helps to establish a tonotopic map. Kinetics of KCNMA1 channels are determined by alternative splicing, phosphorylation status and its combination with modulating beta subunits. Highly sensitive to both iberiotoxin (IbTx) and charybdotoxin (CTX). The protein is Calcium-activated potassium channel subunit alpha-1 (KCNMA1) of Bos taurus (Bovine).